The following is a 206-amino-acid chain: MNNIYQKDLGLQQYTKVFDDMLEFTSTRTPETNDEIWLVEHPAVFTQGKHGKPEHILNSHNIPIVATDRGGQVTYHGPGQAVIYFLLDIKRNKLGAKKLVTTVEQACINMLDKYYNLKAHIIDGAHGIYINNQKIASLGLRIKQGKSYHGIAINTNMDLTPFSYINPCGYSGLKMCQLANFYQEADIKKVQQQYTAEFVTLLNNSI.

The region spanning 30–206 is the BPL/LPL catalytic domain; sequence PETNDEIWLV…EFVTLLNNSI (177 aa). Substrate is bound by residues 69–76, 137–139, and 150–152; these read RGGQVTYH, SLG, and GIA. Catalysis depends on C168, which acts as the Acyl-thioester intermediate.

Belongs to the LipB family.

Its subcellular location is the cytoplasm. It catalyses the reaction octanoyl-[ACP] + L-lysyl-[protein] = N(6)-octanoyl-L-lysyl-[protein] + holo-[ACP] + H(+). The protein operates within protein modification; protein lipoylation via endogenous pathway; protein N(6)-(lipoyl)lysine from octanoyl-[acyl-carrier-protein]: step 1/2. Catalyzes the transfer of endogenously produced octanoic acid from octanoyl-acyl-carrier-protein onto the lipoyl domains of lipoate-dependent enzymes. Lipoyl-ACP can also act as a substrate although octanoyl-ACP is likely to be the physiological substrate. In Francisella tularensis subsp. tularensis (strain FSC 198), this protein is Octanoyltransferase.